Here is a 205-residue protein sequence, read N- to C-terminus: Superoxide dismutase [Mn] (205 aa).

Residues His-30, His-78, Asp-166, and His-170 each contribute to the Mn(2+) site.

This sequence belongs to the iron/manganese superoxide dismutase family. As to quaternary structure, homodimer. The cofactor is Mn(2+).

It catalyses the reaction 2 superoxide + 2 H(+) = H2O2 + O2. In terms of biological role, destroys superoxide anion radicals which are normally produced within the cells and which are toxic to biological systems. The chain is Superoxide dismutase [Mn] (sodA) from Chlamydia muridarum (strain MoPn / Nigg).